Here is a 279-residue protein sequence, read N- to C-terminus: Phage-like element PBSX protein XepA (279 aa).

To B.subtilis YqxG/YqdC.

Its function is as follows. Not known; does not seem to be involved in host cell lysis. The sequence is that of Phage-like element PBSX protein XepA (xepA) from Bacillus subtilis (strain 168).